The following is a 699-amino-acid chain: Polyribonucleotide nucleotidyltransferase (699 aa).

Mg(2+) contacts are provided by Asp485 and Asp491. Residues 552 to 611 form the KH domain; it reads PRITTIKINPEKIRDVIGKGGAVIRALTEETGTTIELEDDGTVKIASSNGDATREAIRRI. Residues 621-689 form the S1 motif domain; sequence GRIYNGKVIR…RQGRVRLSIK (69 aa).

This sequence belongs to the polyribonucleotide nucleotidyltransferase family. In terms of assembly, component of the RNA degradosome, which is a multiprotein complex involved in RNA processing and mRNA degradation. Requires Mg(2+) as cofactor.

It localises to the cytoplasm. It carries out the reaction RNA(n+1) + phosphate = RNA(n) + a ribonucleoside 5'-diphosphate. In terms of biological role, involved in mRNA degradation. Catalyzes the phosphorolysis of single-stranded polyribonucleotides processively in the 3'- to 5'-direction. This is Polyribonucleotide nucleotidyltransferase from Shewanella sp. (strain ANA-3).